We begin with the raw amino-acid sequence, 406 residues long: S-adenosylmethionine synthase (406 aa).

Residue His17 coordinates ATP. Asp19 serves as a coordination point for Mg(2+). Glu45 contributes to the K(+) binding site. L-methionine-binding residues include Glu58 and Gln101. The segment at 101 to 111 (QSAEINQGVAR) is flexible loop. Residues 178 to 180 (DGK), Asp258, 264 to 265 (RK), Ala281, and Lys285 each bind ATP. L-methionine is bound at residue Asp258. Residue Lys289 participates in L-methionine binding.

The protein belongs to the AdoMet synthase family. In terms of assembly, homotetramer; dimer of dimers. The cofactor is Mg(2+). It depends on K(+) as a cofactor.

The protein localises to the cytoplasm. It carries out the reaction L-methionine + ATP + H2O = S-adenosyl-L-methionine + phosphate + diphosphate. The protein operates within amino-acid biosynthesis; S-adenosyl-L-methionine biosynthesis; S-adenosyl-L-methionine from L-methionine: step 1/1. Functionally, catalyzes the formation of S-adenosylmethionine (AdoMet) from methionine and ATP. The overall synthetic reaction is composed of two sequential steps, AdoMet formation and the subsequent tripolyphosphate hydrolysis which occurs prior to release of AdoMet from the enzyme. The sequence is that of S-adenosylmethionine synthase from Bifidobacterium longum (strain NCC 2705).